Reading from the N-terminus, the 132-residue chain is Translation initiation factor 5A (132 aa).

A Hypusine modification is found at K36.

This sequence belongs to the eIF-5A family.

Its subcellular location is the cytoplasm. Its function is as follows. Functions by promoting the formation of the first peptide bond. The sequence is that of Translation initiation factor 5A (eIF5A) from Caldivirga maquilingensis (strain ATCC 700844 / DSM 13496 / JCM 10307 / IC-167).